Consider the following 101-residue polypeptide: Small ribosomal subunit protein uS14 (101 aa).

This sequence belongs to the universal ribosomal protein uS14 family. In terms of assembly, part of the 30S ribosomal subunit. Contacts proteins S3 and S10.

Its function is as follows. Binds 16S rRNA, required for the assembly of 30S particles and may also be responsible for determining the conformation of the 16S rRNA at the A site. The sequence is that of Small ribosomal subunit protein uS14 from Polaromonas naphthalenivorans (strain CJ2).